Here is a 157-residue protein sequence, read N- to C-terminus: Phosphopantetheine adenylyltransferase (157 aa).

Ser-9 serves as a coordination point for substrate. ATP contacts are provided by residues 9 to 10 (SF) and His-17. Residues Lys-41, Val-73, and Lys-87 each coordinate substrate. Residues 88–90 (GLR), Glu-98, and 122–128 (YSFVSSS) contribute to the ATP site.

The protein belongs to the bacterial CoaD family. In terms of assembly, homohexamer. Requires Mg(2+) as cofactor.

It localises to the cytoplasm. It carries out the reaction (R)-4'-phosphopantetheine + ATP + H(+) = 3'-dephospho-CoA + diphosphate. It participates in cofactor biosynthesis; coenzyme A biosynthesis; CoA from (R)-pantothenate: step 4/5. Its function is as follows. Reversibly transfers an adenylyl group from ATP to 4'-phosphopantetheine, yielding dephospho-CoA (dPCoA) and pyrophosphate. This chain is Phosphopantetheine adenylyltransferase, found in Mycobacterium marinum (strain ATCC BAA-535 / M).